A 399-amino-acid polypeptide reads, in one-letter code: Probable dual-specificity RNA methyltransferase RlmN (399 aa).

E97 serves as the catalytic Proton acceptor. The region spanning Y103–S381 is the Radical SAM core domain. A disulfide bond links C110 and C386. [4Fe-4S] cluster is bound by residues C117, C121, and C124. Residues G203–E204, S235, S258–H260, and N343 contribute to the S-adenosyl-L-methionine site. The S-methylcysteine intermediate role is filled by C386.

The protein belongs to the radical SAM superfamily. RlmN family. Requires [4Fe-4S] cluster as cofactor.

The protein localises to the cytoplasm. The catalysed reaction is adenosine(2503) in 23S rRNA + 2 reduced [2Fe-2S]-[ferredoxin] + 2 S-adenosyl-L-methionine = 2-methyladenosine(2503) in 23S rRNA + 5'-deoxyadenosine + L-methionine + 2 oxidized [2Fe-2S]-[ferredoxin] + S-adenosyl-L-homocysteine. It carries out the reaction adenosine(37) in tRNA + 2 reduced [2Fe-2S]-[ferredoxin] + 2 S-adenosyl-L-methionine = 2-methyladenosine(37) in tRNA + 5'-deoxyadenosine + L-methionine + 2 oxidized [2Fe-2S]-[ferredoxin] + S-adenosyl-L-homocysteine. Functionally, specifically methylates position 2 of adenine 2503 in 23S rRNA and position 2 of adenine 37 in tRNAs. This is Probable dual-specificity RNA methyltransferase RlmN from Roseiflexus sp. (strain RS-1).